We begin with the raw amino-acid sequence, 267 residues long: Ribosomal RNA small subunit methyltransferase A (267 aa).

The S-adenosyl-L-methionine site is built by asparagine 12, isoleucine 14, glycine 39, glutamate 60, aspartate 84, and asparagine 110.

Belongs to the class I-like SAM-binding methyltransferase superfamily. rRNA adenine N(6)-methyltransferase family. RsmA subfamily.

It is found in the cytoplasm. The enzyme catalyses adenosine(1518)/adenosine(1519) in 16S rRNA + 4 S-adenosyl-L-methionine = N(6)-dimethyladenosine(1518)/N(6)-dimethyladenosine(1519) in 16S rRNA + 4 S-adenosyl-L-homocysteine + 4 H(+). Functionally, specifically dimethylates two adjacent adenosines (A1518 and A1519) in the loop of a conserved hairpin near the 3'-end of 16S rRNA in the 30S particle. May play a critical role in biogenesis of 30S subunits. This chain is Ribosomal RNA small subunit methyltransferase A, found in Mesoplasma florum (strain ATCC 33453 / NBRC 100688 / NCTC 11704 / L1) (Acholeplasma florum).